A 467-amino-acid chain; its full sequence is 3-isopropylmalate dehydratase large subunit (467 aa).

Cysteine 348, cysteine 408, and cysteine 411 together coordinate [4Fe-4S] cluster. A disordered region spans residues 417–445; sequence DQLTPGERSASTSNRNFEGRQGKGGRTHL.

Belongs to the aconitase/IPM isomerase family. LeuC type 1 subfamily. In terms of assembly, heterodimer of LeuC and LeuD. It depends on [4Fe-4S] cluster as a cofactor.

It catalyses the reaction (2R,3S)-3-isopropylmalate = (2S)-2-isopropylmalate. The protein operates within amino-acid biosynthesis; L-leucine biosynthesis; L-leucine from 3-methyl-2-oxobutanoate: step 2/4. Its function is as follows. Catalyzes the isomerization between 2-isopropylmalate and 3-isopropylmalate, via the formation of 2-isopropylmaleate. The chain is 3-isopropylmalate dehydratase large subunit from Saccharopolyspora erythraea (strain ATCC 11635 / DSM 40517 / JCM 4748 / NBRC 13426 / NCIMB 8594 / NRRL 2338).